Consider the following 504-residue polypeptide: UNC93-like protein C922.05c (504 aa).

Helical transmembrane passes span 64-84 (IIVSWVCFLCPGMFNALSGLG), 97-116 (ANVALYSTFAGLGFFAGSIC), 123-145 (LTLAIGGTGYSVYTASLLCYKHV), 149-169 (GFVIFGGCYLGLTAGMLWAAQ), 186-206 (IAIFWGIFNLGAVIGSIVPLA), 219-239 (GTYAGFIVLMAVGSALALFMV), 275-293 (YWVLLLFPMFFSSNWFTTY), 310-330 (LNNLLYWFAQIMGSAVAALFL), 343-363 (VGWGLVFVLICVIWGGGLAFQ), 391-411 (FLYIFYGMLDAIFQSYAYWII), and 452-472 (YFASCWALLCGSLIVASPVIW).

Belongs to the unc-93 family.

Its subcellular location is the cytoplasm. The protein localises to the membrane. The chain is UNC93-like protein C922.05c from Schizosaccharomyces pombe (strain 972 / ATCC 24843) (Fission yeast).